Consider the following 348-residue polypeptide: Uroporphyrinogen decarboxylase (348 aa).

Residues 24–28 (RQAGR), aspartate 73, tyrosine 150, serine 205, and histidine 324 each bind substrate.

This sequence belongs to the uroporphyrinogen decarboxylase family. In terms of assembly, homodimer.

It is found in the cytoplasm. The catalysed reaction is uroporphyrinogen III + 4 H(+) = coproporphyrinogen III + 4 CO2. It participates in porphyrin-containing compound metabolism; protoporphyrin-IX biosynthesis; coproporphyrinogen-III from 5-aminolevulinate: step 4/4. Its function is as follows. Catalyzes the decarboxylation of four acetate groups of uroporphyrinogen-III to yield coproporphyrinogen-III. The chain is Uroporphyrinogen decarboxylase from Roseiflexus sp. (strain RS-1).